A 196-amino-acid polypeptide reads, in one-letter code: uncharacterized protein (196 aa).

Positions serine 122–threonine 135 are enriched in basic and acidic residues. The segment at serine 122–arginine 150 is disordered.

This is an uncharacterized protein from Leptospira interrogans.